The chain runs to 500 residues: Probable trehalose-phosphate phosphatase 8 (500 aa).

The protein belongs to the trehalose phosphatase family. The cofactor is a divalent metal cation.

The catalysed reaction is alpha,alpha-trehalose 6-phosphate + H2O = alpha,alpha-trehalose + phosphate. It participates in glycan biosynthesis; trehalose biosynthesis. Its function is as follows. Removes the phosphate from trehalose 6-phosphate to produce free trehalose. Trehalose accumulation in plant may improve abiotic stress tolerance. The chain is Probable trehalose-phosphate phosphatase 8 (TPP8) from Oryza sativa subsp. japonica (Rice).